Reading from the N-terminus, the 213-residue chain is Pyrrolidone-carboxylate peptidase (213 aa).

Active-site residues include Glu-80, Cys-143, and His-166.

Belongs to the peptidase C15 family. As to quaternary structure, homotetramer.

It is found in the cytoplasm. It carries out the reaction Release of an N-terminal pyroglutamyl group from a polypeptide, the second amino acid generally not being Pro.. Removes 5-oxoproline from various penultimate amino acid residues except L-proline. The protein is Pyrrolidone-carboxylate peptidase of Clavibacter michiganensis subsp. michiganensis (strain NCPPB 382).